Consider the following 446-residue polypeptide: NAD(P)H sulfur oxidoreductase (CoA-dependent) (446 aa).

17-18 (AA) serves as a coordination point for FAD. A CoA-binding site is contributed by arginine 28. Residues 39 to 40 (EA) and 46 to 48 (HAP) contribute to the FAD site. Residues 45–49 (SHAPC), 66–67 (HY), and arginine 76 contribute to the CoA site. Cysteine 49 functions as the Redox-active in the catalytic mechanism. The FAD site is built by valine 86, aspartate 284, and alanine 302. Residues asparagine 306 and lysine 362 each contribute to the CoA site. Tyrosine 426 is a binding site for FAD. CoA-binding residues include tryptophan 434 and arginine 442.

This sequence belongs to the class-III pyridine nucleotide-disulfide oxidoreductase family. FAD is required as a cofactor.

The catalysed reaction is hydrogen sulfide + NADP(+) = sulfur + NADPH. It carries out the reaction hydrogen sulfide + NAD(+) = sulfur + NADH. Functionally, catalyzes the CoA-dependent reduction of elemental sulfur (S(0)) to produce hydrogen sulfide. The polypeptide is NAD(P)H sulfur oxidoreductase (CoA-dependent) (Pyrococcus abyssi (strain GE5 / Orsay)).